A 160-amino-acid chain; its full sequence is uncharacterized protein (160 aa).

C2H2-type zinc fingers lie at residues 10–32 (LSCL…LPTH), 41–64 (QTCD…KRYH), and 75–98 (FQCQ…KIEH). A Phosphotyrosine modification is found at Tyr-115. At Ser-116 the chain carries Phosphoserine.

The protein resides in the nucleus. In terms of biological role, may be involved in transcriptional regulation. This is an uncharacterized protein from Drosophila melanogaster (Fruit fly).